The sequence spans 190 residues: Holliday junction branch migration complex subunit RuvA (190 aa).

Positions 1–64 are domain I; it reads MIGSLTGIIE…DNLTQLYGFL (64 aa). The interval 65 to 142 is domain II; it reads DKQEQDYMRM…KMPIEETLII (78 aa). A region of interest (flexible linker) is located at residue Lys-143. The interval 143-190 is domain III; sequence KEDDSLAALISLGYDKLKAFNAIQEIKANFPDDSIQEIIRKALQKLSQ.

The protein belongs to the RuvA family. Homotetramer. Forms an RuvA(8)-RuvB(12)-Holliday junction (HJ) complex. HJ DNA is sandwiched between 2 RuvA tetramers; dsDNA enters through RuvA and exits via RuvB. An RuvB hexamer assembles on each DNA strand where it exits the tetramer. Each RuvB hexamer is contacted by two RuvA subunits (via domain III) on 2 adjacent RuvB subunits; this complex drives branch migration. In the full resolvosome a probable DNA-RuvA(4)-RuvB(12)-RuvC(2) complex forms which resolves the HJ.

The protein resides in the cytoplasm. The RuvA-RuvB-RuvC complex processes Holliday junction (HJ) DNA during genetic recombination and DNA repair, while the RuvA-RuvB complex plays an important role in the rescue of blocked DNA replication forks via replication fork reversal (RFR). RuvA specifically binds to HJ cruciform DNA, conferring on it an open structure. The RuvB hexamer acts as an ATP-dependent pump, pulling dsDNA into and through the RuvAB complex. HJ branch migration allows RuvC to scan DNA until it finds its consensus sequence, where it cleaves and resolves the cruciform DNA. In Ehrlichia chaffeensis (strain ATCC CRL-10679 / Arkansas), this protein is Holliday junction branch migration complex subunit RuvA.